Here is a 96-residue protein sequence, read N- to C-terminus: MNIRPLHDRVIVKRLEVESTSAGGIVLTGSAAEKSTRGEILAVGNGRILENGTVKPLDVKVGDVVIFNEGYGVKKEKIDGQEVLILSEADLMAVVG.

Belongs to the GroES chaperonin family. As to quaternary structure, heptamer of 7 subunits arranged in a ring. Interacts with the chaperonin GroEL.

Its subcellular location is the cytoplasm. Functionally, together with the chaperonin GroEL, plays an essential role in assisting protein folding. The GroEL-GroES system forms a nano-cage that allows encapsulation of the non-native substrate proteins and provides a physical environment optimized to promote and accelerate protein folding. GroES binds to the apical surface of the GroEL ring, thereby capping the opening of the GroEL channel. The chain is Co-chaperonin GroES from Shewanella baltica (strain OS223).